Here is a 796-residue protein sequence, read N- to C-terminus: Nuclear GTPase SLIP-GC (796 aa).

The segment covering 1-22 has biased composition (basic and acidic residues); the sequence is MAETKDVFGQEPHPVEDDLYKE. Positions 1–35 are disordered; the sequence is MAETKDVFGQEPHPVEDDLYKERTRKRRKSDRDQR. A GTP-binding site is contributed by 107–114; the sequence is GSTGAGKS. Coiled coils occupy residues 158–185 and 745–775; these read SDQE…EEAD and KELA…RLRK.

Expressed in germinal center B-cell and in lymphomas derived from germinal center B-cell.

The protein resides in the nucleus speckle. In terms of biological role, nuclear GTPase found in germinal center B-cells, where it may inhibit function of the activation-induced cytidine deaminase AICDA. Reduces somatic hypermutation in B-cells which may enhance genome stability. This chain is Nuclear GTPase SLIP-GC (NUGGC), found in Homo sapiens (Human).